Here is a 511-residue protein sequence, read N- to C-terminus: Apolipoprotein N-acyltransferase (511 aa).

6 helical membrane passes run 7 to 29, 58 to 78, 90 to 110, 125 to 145, 163 to 183, and 192 to 212; these read PGWPGHLLALAAGALTPLALAPF, GWWYGFGAFGAGTSWIYVSIH, LLMLGFTAGVAFFFALPAWLW, LAFAALWLALELFRSWFLTGF, VPVGGVWLSSFVIALSAALLV, and GASLLLGLVLLLGPWAAGLYL. One can recognise a CN hydrolase domain in the interval 230–470; it reads IQGNIAQELK…QGILRGEVIP (241 aa). The Proton acceptor role is filled by E269. K330 is an active-site residue. C382 (nucleophile) is an active-site residue. A helical transmembrane segment spans residues 482 to 502; that stretch reads VWPLAGLAGVLLLWALLGRQL.

The protein belongs to the CN hydrolase family. Apolipoprotein N-acyltransferase subfamily.

The protein localises to the cell inner membrane. The catalysed reaction is N-terminal S-1,2-diacyl-sn-glyceryl-L-cysteinyl-[lipoprotein] + a glycerophospholipid = N-acyl-S-1,2-diacyl-sn-glyceryl-L-cysteinyl-[lipoprotein] + a 2-acyl-sn-glycero-3-phospholipid + H(+). It functions in the pathway protein modification; lipoprotein biosynthesis (N-acyl transfer). Functionally, catalyzes the phospholipid dependent N-acylation of the N-terminal cysteine of apolipoprotein, the last step in lipoprotein maturation. The polypeptide is Apolipoprotein N-acyltransferase (Pseudomonas aeruginosa (strain ATCC 15692 / DSM 22644 / CIP 104116 / JCM 14847 / LMG 12228 / 1C / PRS 101 / PAO1)).